Reading from the N-terminus, the 336-residue chain is Phosphate acyltransferase (336 aa).

It belongs to the PlsX family. In terms of assembly, homodimer. Probably interacts with PlsY.

It localises to the cytoplasm. It carries out the reaction a fatty acyl-[ACP] + phosphate = an acyl phosphate + holo-[ACP]. It participates in lipid metabolism; phospholipid metabolism. In terms of biological role, catalyzes the reversible formation of acyl-phosphate (acyl-PO(4)) from acyl-[acyl-carrier-protein] (acyl-ACP). This enzyme utilizes acyl-ACP as fatty acyl donor, but not acyl-CoA. In Pseudomonas putida (strain ATCC 700007 / DSM 6899 / JCM 31910 / BCRC 17059 / LMG 24140 / F1), this protein is Phosphate acyltransferase.